A 287-amino-acid chain; its full sequence is MGTRSYRPYTPSTRQVTISDFAEITKTEPEKSLTVYKHRAKGRNNQGRITSRRRGGGHKRLYRIIDFKRDKRSIPATVIAIEYDPNRNARIALVSYEDGEKRYILHPNNLKVGTVIIAGPESPIEDGNALPLANIPLGTSVHNVELKAGKGGQIVRSAGATAQVVAKEGNYVTLKLPSGEVRLIRRECYATIGQVGNTDARNLSAGKAGRNRWKGRRPKVRGSVMNPVDHPHGGGEGRAPIGRSGPVTPWGKPTLGAKTRKPKKASSKLIIRRRRKSSKRGRGGRES.

The tract at residues 203–287 (LSAGKAGRNR…SKRGRGGRES (85 aa)) is disordered. Composition is skewed to basic residues over residues 209–220 (GRNRWKGRRPKV) and 258–287 (KTRKPKKASSKLIIRRRRKSSKRGRGGRES).

This sequence belongs to the universal ribosomal protein uL2 family. Part of the 50S ribosomal subunit. Forms a bridge to the 30S subunit in the 70S ribosome.

Functionally, one of the primary rRNA binding proteins. Required for association of the 30S and 50S subunits to form the 70S ribosome, for tRNA binding and peptide bond formation. It has been suggested to have peptidyltransferase activity; this is somewhat controversial. Makes several contacts with the 16S rRNA in the 70S ribosome. The chain is Large ribosomal subunit protein uL2 from Nostoc sp. (strain PCC 7120 / SAG 25.82 / UTEX 2576).